The chain runs to 127 residues: UPF0102 protein Mmar10_3014 (127 aa).

Belongs to the UPF0102 family.

The sequence is that of UPF0102 protein Mmar10_3014 from Maricaulis maris (strain MCS10) (Caulobacter maris).